The chain runs to 117 residues: Large ribosomal subunit protein bL20 (117 aa).

Belongs to the bacterial ribosomal protein bL20 family.

Binds directly to 23S ribosomal RNA and is necessary for the in vitro assembly process of the 50S ribosomal subunit. It is not involved in the protein synthesizing functions of that subunit. The polypeptide is Large ribosomal subunit protein bL20 (Magnetococcus marinus (strain ATCC BAA-1437 / JCM 17883 / MC-1)).